The primary structure comprises 189 residues: MALSFSLLMAVLVLSYKSICSLGCDLPQTHSLGNRRALILLAQMGRISPFSCLKDRHDFGLPQEEFDGNQFQKTQAISVLHEMIQQTFNLFSTEDSSAAWEQSLLEKFSTELYQQLNNLEACVIQEVGMEETPLMNEDSILAVRKYFQRITLYLTEKKYSPCAWEVVRAEIMRSLSFSTNLQKILRRKD.

An N-terminal signal peptide occupies residues 1-23; it reads MALSFSLLMAVLVLSYKSICSLG. Intrachain disulfides connect Cys24–Cys122 and Cys52–Cys162.

This sequence belongs to the alpha/beta interferon family.

The protein localises to the secreted. Its function is as follows. Produced by macrophages, IFN-alpha have antiviral activities. Interferon stimulates the production of two enzymes: a protein kinase and an oligoadenylate synthetase. This chain is Interferon alpha-17 (IFNA17), found in Homo sapiens (Human).